We begin with the raw amino-acid sequence, 680 residues long: Pilus tip adhesin Cpa (680 aa).

Residues 62–211 (CFNLTKHFPS…IFQSSDKTFQ (150 aa)) constitute a cross-link (isoglutamyl cysteine thioester (Cys-Gln)). The segment at 217–236 (EYVPDTPPKPGEEPPAKTEK) is disordered. Over residues 226–236 (PGEEPPAKTEK) the composition is skewed to basic and acidic residues. Positions 243–546 (KYAEGDYSKL…ELIDVISMED (304 aa)) form a cross-link, isoaspartyl lysine isopeptide (Lys-Asp). Residues 253 to 311 (LEGATLKLAQIEGSGFQEKIFDSNKSGEKVELPNGTYVLSELKPPQGYGVATPITFKVA) form the CNA-B domain. The isoglutamyl cysteine thioester (Cys-Gln) cross-link spans 374–526 (CFNADLHSPP…FFVPNSSRYQ (153 aa)). Positions 562-667 (KTVTGTIADK…KEDETVAFEN (106 aa)) form a cross-link, isoaspartyl lysine isopeptide (Lys-Asn). A VPPTG sorting signal motif is present at residues 672 to 676 (VPPTG). Residue Thr675 forms a Threonyl lysine isopeptide (Thr-Lys) (interchain with K-? in major pilin subunit) linkage. The propeptide at 676–680 (GLTTD) is removed by sortase.

As to quaternary structure, monomer. Proteolytically processed and assembled in pili through a transpeptidation reaction catalyzed by a sortase, which leads to a covalent link between Cpa and a major pilin subunit.

The protein localises to the fimbrium. Its function is as follows. Component of the pilus tip. Can bind covalently, via its two reactive thioester bonds, to molecular targets from host cell surface and can thus mediate adhesion of the streptococcal pili to host cells. Lysine side chains or a carbohydrate with a free amine group might be candidates for Cpa binding. In vitro, can covalently bind to spermidine, but it is unlikely that spermidine is the natural target of Cpa. The protein is Pilus tip adhesin Cpa (cpa) of Streptococcus pyogenes.